A 178-amino-acid chain; its full sequence is uncharacterized protein (178 aa).

A helical transmembrane segment spans residues 7–27 (LAIGTAILLIGMAYWTVSIVE).

It is found in the membrane. This is an uncharacterized protein from Methanocaldococcus jannaschii (strain ATCC 43067 / DSM 2661 / JAL-1 / JCM 10045 / NBRC 100440) (Methanococcus jannaschii).